Consider the following 151-residue polypeptide: 3-hydroxyacyl-[acyl-carrier-protein] dehydratase FabZ (151 aa).

Residue histidine 54 is part of the active site.

This sequence belongs to the thioester dehydratase family. FabZ subfamily.

The protein resides in the cytoplasm. It catalyses the reaction a (3R)-hydroxyacyl-[ACP] = a (2E)-enoyl-[ACP] + H2O. Involved in unsaturated fatty acids biosynthesis. Catalyzes the dehydration of short chain beta-hydroxyacyl-ACPs and long chain saturated and unsaturated beta-hydroxyacyl-ACPs. The chain is 3-hydroxyacyl-[acyl-carrier-protein] dehydratase FabZ from Salmonella agona (strain SL483).